Here is a 498-residue protein sequence, read N- to C-terminus: ATP synthase subunit beta, chloroplastic (498 aa).

Thr6 is modified (phosphothreonine). Phosphoserine is present on Ser13. Residue 172 to 179 coordinates ATP; sequence GGAGVGKT.

It belongs to the ATPase alpha/beta chains family. In terms of assembly, F-type ATPases have 2 components, CF(1) - the catalytic core - and CF(0) - the membrane proton channel. CF(1) has five subunits: alpha(3), beta(3), gamma(1), delta(1), epsilon(1). CF(0) has four main subunits: a(1), b(1), b'(1) and c(9-12).

The protein localises to the plastid. It localises to the chloroplast thylakoid membrane. The enzyme catalyses ATP + H2O + 4 H(+)(in) = ADP + phosphate + 5 H(+)(out). Its function is as follows. Produces ATP from ADP in the presence of a proton gradient across the membrane. The catalytic sites are hosted primarily by the beta subunits. The polypeptide is ATP synthase subunit beta, chloroplastic (Crucihimalaya wallichii (Rock-cress)).